A 329-amino-acid polypeptide reads, in one-letter code: Olfactory receptor 10J3 (329 aa).

The Extracellular segment spans residues 1 to 26; the sequence is MPKLNSTFVTEFLFEGFSSFRRQHKL. A glycan (N-linked (GlcNAc...) asparagine) is linked at N5. A helical transmembrane segment spans residues 27 to 47; it reads VFFVVFLTLYLLTLSGNVIIM. Residues 48–55 are Cytoplasmic-facing; that stretch reads TIIRLDHH. A helical transmembrane segment spans residues 56–76; that stretch reads LHTPMYFFLCMLSISETCYTV. Residues 77–100 are Extracellular-facing; it reads AIIPHMLSGLLNPHQPIATQSCAT. C98 and C190 form a disulfide bridge. The chain crosses the membrane as a helical span at residues 101 to 121; it reads QLFFYLTFGINNCFLLTVMGY. Residues 122-140 lie on the Cytoplasmic side of the membrane; that stretch reads DRYVAICNPLRYSVIMGKR. The helical transmembrane segment at 141 to 161 threads the bilayer; it reads ACIQLASGSLGIGLGMAIVQV. The Extracellular segment spans residues 162-198; the sequence is TSVFGLPFCDAFVISHFFCDVRHLLKLACTDTTVNEI. A helical membrane pass occupies residues 199–218; it reads INFVVSVCVLVLPMGLVFIS. Topologically, residues 219–238 are cytoplasmic; the sequence is YVLIISTILKIASAEGQKKA. A helical membrane pass occupies residues 239–259; that stretch reads FATCASHLTVVIIHYGCASII. At 260–272 the chain is on the extracellular side; the sequence is YLKPKSQSSLGQD. A helical membrane pass occupies residues 273–293; the sequence is RLISVTYTHHSPTEPCCVQPE. Residues 294 to 329 are Cytoplasmic-facing; it reads EQGGQRCSAQSRGAKNSVSLMKRGCEGFSFAFINMY.

Belongs to the G-protein coupled receptor 1 family.

It localises to the cell membrane. In terms of biological role, odorant receptor. This Homo sapiens (Human) protein is Olfactory receptor 10J3 (OR10J3).